The sequence spans 263 residues: Ribonuclease HII (263 aa).

The 192-residue stretch at 71-262 (QAIAGIDEVG…VKSMCCDSTN (192 aa)) folds into the RNase H type-2 domain. Residues D77, E78, and D172 each contribute to the a divalent metal cation site.

Belongs to the RNase HII family. Mn(2+) serves as cofactor. The cofactor is Mg(2+).

The protein resides in the cytoplasm. It carries out the reaction Endonucleolytic cleavage to 5'-phosphomonoester.. Endonuclease that specifically degrades the RNA of RNA-DNA hybrids. The protein is Ribonuclease HII of Streptococcus pyogenes serotype M5 (strain Manfredo).